The following is a 465-amino-acid chain: Glycine-rich cell wall structural protein 1.8 (465 aa).

The signal sequence occupies residues 1 to 30 (MATIHRLPSLVFLVLLALGVCSARRALLTL). Tandem repeats lie at residues 205 to 226 (HGGGGGGGQGGGAGGGYGAGGE), 227 to 248 (HGGGAGGGQGGGAGGGYGAGGE), 249 to 270 (HGGGAGGGQGGGAGGGYGAGGE), 271 to 292 (HGGGAGGGQGGGAGGGYGAGGE), 293 to 314 (HGGGAGGGQGGGAGGGYGAGGE), 315 to 336 (HGGGGGGGQGGGAGGGYAAVGE), 337 to 358 (HGGGYGGGQGGGDGGGYGTGGE), and 359 to 380 (HGGGYGGGQGGGAGGGYGTGGE). Residues 205 to 380 (HGGGGGGGQG…AGGGYGTGGE (176 aa)) are 8 X 22 AA tandem repeats of H-G-G-G-[GAY]-G-G-G-Q-G-G-G-[AD]-G-G-G-Y-[GA]-[AT]-[GV]-G-E.

Expressed in young hypocotyls.

The protein localises to the secreted. Its subcellular location is the cell wall. In terms of biological role, responsible for plasticity of the cell wall. In Phaseolus vulgaris (Kidney bean), this protein is Glycine-rich cell wall structural protein 1.8.